Consider the following 943-residue polypeptide: Nuclear factor of activated T-cells, cytoplasmic 1 (943 aa).

The tract at residues 22–48 (GRGETLGPAPRAGGTMKSAEEEHYGYA) is disordered. Residues 118–123 (PRIEIT) are calcineurin-binding. The segment at 126 to 218 (LGLYHNNNQF…CVSPKTTDPE (93 aa)) is transactivation domain A (TAD-A). The disordered stretch occupies residues 200–298 (PQTSPWQSPC…GSPRVSVTDD (99 aa)). The span at 201 to 214 (QTSPWQSPCVSPKT) shows a compositional bias: polar residues. 2 repeat units span residues 203-219 (SPWQ…DPEE) and 233-249 (SPRH…VTEE). Residues 203–298 (SPWQSPCVSP…GSPRVSVTDD (96 aa)) form a 3 X SP repeats region. Phosphoserine occurs at positions 233 and 237. A compositionally biased stretch (polar residues) spans 236–248 (HSPSTSPRASVTE). Phosphoserine; by PKA is present on S245. The Nuclear localization signal signature appears at 265–267 (KRK). S269 carries the phosphoserine; by PKA modification. Positions 276-288 (PYSPHHSPTPSPH) are enriched in pro residues. Repeat unit 3 spans residues 282-298 (SPTPSPHGSPRVSVTDD). Residue S294 is modified to Phosphoserine; by PKA. A Nuclear export signal motif is present at residues 310-321 (SAIVAAINALTT). Residues 410-592 (PTLPALDWQL…NPIECSQRSA (183 aa)) form the RHD domain. Residues 439-446 (RAHYETEG) mediate DNA binding. A Nuclear localization signal motif is present at residues 682–684 (KRK). The transactivation domain B (TAD-B) stretch occupies residues 703 to 943 (TEPTDDYEPA…NDLSSTSTHS (241 aa)). The disordered stretch occupies residues 787 to 912 (HLGLPQPAGE…SPNLAPIPVT (126 aa)). Residues 846-855 (SPSPPLPPAT) show a composition bias toward pro residues. A Nuclear export signal motif is present at residues 924 to 933 (YLDDVNEIIR).

As to quaternary structure, member of the multicomponent NFATC transcription complex that consists of at least two components, a pre-existing cytoplasmic component NFATC2 and an inducible nuclear component NFATC1. Other members such as NFATC4, NFATC3 or members of the activating protein-1 family, MAF, GATA4 and Cbp/p300 can also bind the complex. NFATC proteins bind to DNA as monomers. Interacts with HOMER2 and HOMER3; this interaction may compete with calcineurin/PPP3CA-binding and hence prevent NFATC1 dephosphorylation and activation. Interacts with TLE6/GRG6. In terms of processing, phosphorylated by NFATC-kinase and GSK3B; phosphorylation induces NFATC1 nuclear exit and dephosphorylation by calcineurin promotes nuclear import. Phosphorylation by PKA and DYRK2 negatively modulates nuclear accumulation, and promotes subsequent phosphorylation by GSK3B or casein kinase 1. Expressed in thymus, peripheral leukocytes as T-cells and spleen. Isoforms A are preferentially expressed in effector T-cells (thymus and peripheral leukocytes) whereas isoforms B and isoforms C are preferentially expressed in naive T-cells (spleen). Isoforms B are expressed in naive T-cells after first antigen exposure and isoforms A are expressed in effector T-cells after second antigen exposure. Isoforms IA are widely expressed but not detected in liver nor pancreas, neural expression is strongest in corpus callosum. Isoforms IB are expressed mostly in muscle, cerebellum, placenta and thymus, neural expression in fetal and adult brain, strongest in corpus callosum.

Its subcellular location is the cytoplasm. It is found in the nucleus. In terms of biological role, plays a role in the inducible expression of cytokine genes in T-cells, especially in the induction of the IL-2 or IL-4 gene transcription. Also controls gene expression in embryonic cardiac cells. Could regulate not only the activation and proliferation but also the differentiation and programmed death of T-lymphocytes as well as lymphoid and non-lymphoid cells. Required for osteoclastogenesis and regulates many genes important for osteoclast differentiation and function. This Homo sapiens (Human) protein is Nuclear factor of activated T-cells, cytoplasmic 1 (NFATC1).